Consider the following 355-residue polypeptide: GTPase Obg (355 aa).

Residues 1-159 enclose the Obg domain; it reads MKLVDEAEIL…RLLKLELKLL (159 aa). Positions 160 to 342 constitute an OBG-type G domain; the sequence is ADVGLLGFPN…IMKDVMAFFD (183 aa). GTP is bound by residues 166–173, 191–195, 213–216, 292–295, and 323–325; these read GFPNAGKS, FTTLY, DVPG, NKAD, and SAL. Mg(2+) is bound by residues serine 173 and threonine 193.

The protein belongs to the TRAFAC class OBG-HflX-like GTPase superfamily. OBG GTPase family. Monomer. It depends on Mg(2+) as a cofactor.

The protein localises to the cytoplasm. An essential GTPase which binds GTP, GDP and possibly (p)ppGpp with moderate affinity, with high nucleotide exchange rates and a fairly low GTP hydrolysis rate. Plays a role in control of the cell cycle, stress response, ribosome biogenesis and in those bacteria that undergo differentiation, in morphogenesis control. The protein is GTPase Obg of Xanthomonas euvesicatoria pv. vesicatoria (strain 85-10) (Xanthomonas campestris pv. vesicatoria).